The primary structure comprises 477 residues: Serine/threonine-protein kinase prp4 (477 aa).

The disordered stretch occupies residues 25–123 (KYQQTGNGHS…SPSVKRQNTG (99 aa)). Positions 38-47 (IPEKKLKEDV) are enriched in basic and acidic residues. Positions 74 to 86 (EGSNSNTKLDVTN) are enriched in polar residues. A compositionally biased stretch (low complexity) spans 87–98 (STTSDSPSIKSS). Ser-92 is subject to Phosphoserine. A compositionally biased stretch (polar residues) spans 113–123 (PSPSVKRQNTG). In terms of domain architecture, Protein kinase spans 159–477 (YIVQSNLGKG…ALKHPFFIKK (319 aa)). Residues 165–173 (LGKGMFSTV) and Lys-188 each bind ATP. The active-site Proton acceptor is Asp-286. A Phosphotyrosine modification is found at Tyr-320.

Belongs to the protein kinase superfamily. CMGC Ser/Thr protein kinase family.

The enzyme catalyses L-seryl-[protein] + ATP = O-phospho-L-seryl-[protein] + ADP + H(+). It catalyses the reaction L-threonyl-[protein] + ATP = O-phospho-L-threonyl-[protein] + ADP + H(+). Its function is as follows. Has a role in pre-mRNA splicing and is essential for growth. Phosphorylates srp1. This chain is Serine/threonine-protein kinase prp4 (prp4), found in Schizosaccharomyces pombe (strain 972 / ATCC 24843) (Fission yeast).